Consider the following 296-residue polypeptide: Nitrogenase iron protein (296 aa).

11 to 18 (GKGGIGKS) serves as a coordination point for ATP. Cys99 is a binding site for [4Fe-4S] cluster. Position 102 is an ADP-ribosylarginine; by dinitrogenase reductase ADP-ribosyltransferase (Arg102). Cys134 serves as a coordination point for [4Fe-4S] cluster.

This sequence belongs to the NifH/BchL/ChlL family. As to quaternary structure, homodimer. The cofactor is [4Fe-4S] cluster. In terms of processing, the reversible ADP-ribosylation of Arg-102 inactivates the nitrogenase reductase and regulates nitrogenase activity.

The enzyme catalyses N2 + 8 reduced [2Fe-2S]-[ferredoxin] + 16 ATP + 16 H2O = H2 + 8 oxidized [2Fe-2S]-[ferredoxin] + 2 NH4(+) + 16 ADP + 16 phosphate + 6 H(+). Functionally, the key enzymatic reactions in nitrogen fixation are catalyzed by the nitrogenase complex, which has 2 components: the iron protein and the molybdenum-iron protein. The polypeptide is Nitrogenase iron protein (Dechloromonas aromatica (strain RCB)).